A 296-amino-acid polypeptide reads, in one-letter code: (+)-neomenthol dehydrogenase (296 aa).

16-40 contributes to the NADP(+) binding site; it reads RGIGFEICRQLASEGIRVVLTSRDE. Substrate is bound at residue S164. The Proton acceptor role is filled by Y220.

This sequence belongs to the short-chain dehydrogenases/reductases (SDR) family. In terms of assembly, monomer.

The protein resides in the cytoplasm. The enzyme catalyses (+)-neomenthol + NADP(+) = (1R,4S)-menthone + NADPH + H(+). Aldehyde reductase that catalyzes the reduction of the aldehyde carbonyl groups on saturated and alpha,beta-unsaturated aldehydes with more than 5 carbons. Involved in basal resistance against pathogens. In Arabidopsis thaliana (Mouse-ear cress), this protein is (+)-neomenthol dehydrogenase (SDR1).